A 134-amino-acid chain; its full sequence is Large ribosomal subunit protein uL22 (134 aa).

The protein belongs to the universal ribosomal protein uL22 family. In terms of assembly, part of the 50S ribosomal subunit.

Its function is as follows. This protein binds specifically to 23S rRNA; its binding is stimulated by other ribosomal proteins, e.g. L4, L17, and L20. It is important during the early stages of 50S assembly. It makes multiple contacts with different domains of the 23S rRNA in the assembled 50S subunit and ribosome. In terms of biological role, the globular domain of the protein is located near the polypeptide exit tunnel on the outside of the subunit, while an extended beta-hairpin is found that lines the wall of the exit tunnel in the center of the 70S ribosome. The chain is Large ribosomal subunit protein uL22 from Porphyromonas gingivalis (strain ATCC 33277 / DSM 20709 / CIP 103683 / JCM 12257 / NCTC 11834 / 2561).